A 151-amino-acid polypeptide reads, in one-letter code: MGRLVFVSFSLLVVFLSLSGTAADCPSGWSSYEGHCYKPFNEPKNWDDAERFCLEQAKGGHLVSIESSEEADFVAQLVANNVRRGISYIWIGLRVQGEEKQCSTKWSDGSSVNYENWIEALSKTCLGLEQDTNHKWVNIYCGEINPFVCKA.

Residues Met-1–Ala-23 form the signal peptide. Intrachain disulfides connect Cys-25–Cys-36, Cys-53–Cys-149, and Cys-125–Cys-141. Residues Tyr-32 to Lys-150 enclose the C-type lectin domain.

The protein belongs to the snaclec family. In terms of assembly, heterodimer; disulfide-linked. In terms of tissue distribution, expressed by the venom gland.

It localises to the secreted. Functionally, interferes with one step of hemostasis (modulation of platelet aggregation, or coagulation cascade, for example). The sequence is that of Snaclec 3 from Sistrurus catenatus edwardsii (Desert massasauga).